The following is a 248-amino-acid chain: Small ribosomal subunit protein uS3 (248 aa).

The KH type-2 domain occupies 38–106 (IREFLSEGLE…QVQLNILEVK (69 aa)). The segment covering 214 to 229 (SLMNARDERPSRGGRR) has biased composition (basic and acidic residues). The segment at 214 to 248 (SLMNARDERPSRGGRRERPRRGGARRQRAEKKQEG) is disordered. Residues 230 to 242 (ERPRRGGARRQRA) show a composition bias toward basic residues.

It belongs to the universal ribosomal protein uS3 family. As to quaternary structure, part of the 30S ribosomal subunit. Forms a tight complex with proteins S10 and S14.

Its function is as follows. Binds the lower part of the 30S subunit head. Binds mRNA in the 70S ribosome, positioning it for translation. This Corynebacterium urealyticum (strain ATCC 43042 / DSM 7109) protein is Small ribosomal subunit protein uS3.